The following is a 599-amino-acid chain: Aspartate--tRNA(Asp/Asn) ligase (599 aa).

Position 174 (E174) interacts with L-aspartate. Positions 198–201 (QLFK) are aspartate. R220 contacts L-aspartate. ATP contacts are provided by residues 220–222 (RDE) and Q229. H457 is a binding site for L-aspartate. Residue E491 participates in ATP binding. R498 lines the L-aspartate pocket. Residue 543 to 546 (GLDR) coordinates ATP.

The protein belongs to the class-II aminoacyl-tRNA synthetase family. Type 1 subfamily. As to quaternary structure, homodimer.

The protein resides in the cytoplasm. It catalyses the reaction tRNA(Asx) + L-aspartate + ATP = L-aspartyl-tRNA(Asx) + AMP + diphosphate. Functionally, aspartyl-tRNA synthetase with relaxed tRNA specificity since it is able to aspartylate not only its cognate tRNA(Asp) but also tRNA(Asn). Reaction proceeds in two steps: L-aspartate is first activated by ATP to form Asp-AMP and then transferred to the acceptor end of tRNA(Asp/Asn). This is Aspartate--tRNA(Asp/Asn) ligase from Paraburkholderia phymatum (strain DSM 17167 / CIP 108236 / LMG 21445 / STM815) (Burkholderia phymatum).